Consider the following 1316-residue polypeptide: DNA-directed RNA polymerase subunit beta' (1316 aa).

Zn(2+) is bound by residues cysteine 60, cysteine 62, cysteine 75, and cysteine 78. Mg(2+)-binding residues include aspartate 535, aspartate 537, and aspartate 539. The Zn(2+) site is built by cysteine 891, cysteine 968, cysteine 975, and cysteine 978.

Belongs to the RNA polymerase beta' chain family. As to quaternary structure, the RNAP catalytic core consists of 2 alpha, 1 beta, 1 beta' and 1 omega subunit. When a sigma factor is associated with the core the holoenzyme is formed, which can initiate transcription. Mg(2+) serves as cofactor. The cofactor is Zn(2+).

The enzyme catalyses RNA(n) + a ribonucleoside 5'-triphosphate = RNA(n+1) + diphosphate. Its function is as follows. DNA-dependent RNA polymerase catalyzes the transcription of DNA into RNA using the four ribonucleoside triphosphates as substrates. The sequence is that of DNA-directed RNA polymerase subunit beta' from Mycobacterium marinum (strain ATCC BAA-535 / M).